Reading from the N-terminus, the 183-residue chain is Adenine phosphoribosyltransferase (183 aa).

This sequence belongs to the purine/pyrimidine phosphoribosyltransferase family. Homodimer.

The protein localises to the cytoplasm. The catalysed reaction is AMP + diphosphate = 5-phospho-alpha-D-ribose 1-diphosphate + adenine. It participates in purine metabolism; AMP biosynthesis via salvage pathway; AMP from adenine: step 1/1. Catalyzes a salvage reaction resulting in the formation of AMP, that is energically less costly than de novo synthesis. The polypeptide is Adenine phosphoribosyltransferase (Salmonella arizonae (strain ATCC BAA-731 / CDC346-86 / RSK2980)).